A 436-amino-acid polypeptide reads, in one-letter code: MSDRQQVTNAKGDRIAIVTGLRTPFAKQATAFHGVSALDMGKMVVNELLSRSELDPKEIQQLVYGQVVQMPAAPNIAREIVLGTGMDIATDAYSVTRACATSFQSTVNVAESIMTGNIDIGIAGGSDSSSVLPIGVSKKLAHGLVDLNKARSFGQKLAIFRRLGLKDLLPVPPAVAEYSTGLSMGQTAEQMAKTYNISRADQDALAHRSHSLATETWNSGNLAQEVMTAHVPPYKAFIDRDNNIRENSSIESYAKLRPAFDRKHGTVTAATSTPLTDGASAILLMSESRAKALGYNPIGYIKSYAFSAIDVWEDMLMGPSYATPIALKRAGMELEDLTLIEMHEAFAAQALANMKMFASKKFAQEKLGRNRAIGEIDMNKFNVLGGSLAYGHPFAATGARLITQVCNELKRRGGGTGLTTACAAGGLGAAMIVEVE.

C99 (acyl-thioester intermediate) is an active-site residue. Catalysis depends on proton acceptor residues H392 and C422.

The protein belongs to the thiolase-like superfamily. Thiolase family. As to quaternary structure, heterotetramer of two alpha chains (FadJ) and two beta chains (FadI).

It is found in the cytoplasm. It catalyses the reaction an acyl-CoA + acetyl-CoA = a 3-oxoacyl-CoA + CoA. The protein operates within lipid metabolism; fatty acid beta-oxidation. In terms of biological role, catalyzes the final step of fatty acid oxidation in which acetyl-CoA is released and the CoA ester of a fatty acid two carbons shorter is formed. The protein is 3-ketoacyl-CoA thiolase of Shewanella woodyi (strain ATCC 51908 / MS32).